Consider the following 304-residue polypeptide: Tritrans,polycis-undecaprenyl-diphosphate synthase (geranylgeranyl-diphosphate specific) (304 aa).

D33 is an active-site residue. D33 is a Mg(2+) binding site. Substrate contacts are provided by residues 34-37, K46, H50, and 78-80; these read GNRR and STE. The Proton acceptor role is filled by N81. Residues F82, R84, R203, and 209 to 211 contribute to the substrate site; that span reads RTS.

The protein belongs to the UPP synthase family. As to quaternary structure, homodimer. The cofactor is Mg(2+).

It carries out the reaction geranylgeranyl diphosphate + 7 isopentenyl diphosphate = tri-trans,hepta-cis-undecaprenyl diphosphate + 7 diphosphate. Its function is as follows. Catalyzes the sequential condensation of isopentenyl diphosphate (IPP) with geranylgeranyl diphosphate (GGPP) to yield (2Z,6Z,10Z,14Z,18Z,22Z,26Z,30E,34E,38E)-undecaprenyl diphosphate (tritrans,heptacis-UPP). It is probably the precursor of glycosyl carrier lipids. The chain is Tritrans,polycis-undecaprenyl-diphosphate synthase (geranylgeranyl-diphosphate specific) from Haloarcula marismortui (strain ATCC 43049 / DSM 3752 / JCM 8966 / VKM B-1809) (Halobacterium marismortui).